The following is a 258-amino-acid chain: 5'-nucleotidase SurE (258 aa).

Residues aspartate 8, aspartate 9, serine 40, and asparagine 93 each coordinate a divalent metal cation.

It belongs to the SurE nucleotidase family. Requires a divalent metal cation as cofactor.

It is found in the cytoplasm. The catalysed reaction is a ribonucleoside 5'-phosphate + H2O = a ribonucleoside + phosphate. Functionally, nucleotidase that shows phosphatase activity on nucleoside 5'-monophosphates. This is 5'-nucleotidase SurE from Afipia carboxidovorans (strain ATCC 49405 / DSM 1227 / KCTC 32145 / OM5) (Oligotropha carboxidovorans).